The primary structure comprises 375 residues: Cytochrome P450 monooxygenase ACRTS1 (375 aa).

Heme is bound at residue C321.

Belongs to the cytochrome P450 family. Requires heme as cofactor.

The protein operates within mycotoxin biosynthesis. Its function is as follows. Cytochrome P450 monooxygenase; part of the gene cluster that mediates the biosynthesis of the host-selective toxins (HSTs) ACR-toxins responsible for brown spot of rough lemon disease by the rough lemon pathotype. ACR-toxins cause uncoupling of mitochondrial oxidative-phosphorylation similar to that of classic protonophore. The structure of the major form of ACR-toxin (ACR-toxin I) consists of an alpha-dihydropyrone ring in a 19-carbon polyalcohol, a typical polyketide structure. Minor toxins were characterized as having a pyrone ring with polyalcohol side chains different in length and showing weaker toxicity. The highly reducing polyketide synthase ACRTS2 has all necessary enzymatic domains for multiple cycles of condensation and beta-keto processing. The cytochrome P450 monooxygenase ACRTS1 has also been shown to be essential for ACR-toxin biosynthesis, however its exact role in the pathway has not been elucidated yet. The protein is Cytochrome P450 monooxygenase ACRTS1 of Alternaria alternata (Alternaria rot fungus).